The primary structure comprises 298 residues: Ribosomal RNA processing protein 36 homolog (298 aa).

The disordered stretch occupies residues 1–131 (MKPDIIKKRR…SDAPVEMTAM (131 aa)). The span at 14 to 56 (SDDEDEYNEEDEMYEDDNNNYEEDEDDDDDDDEDDEDDDENEE) shows a compositional bias: acidic residues. Polar residues-rich tracts occupy residues 61 to 70 (QQLSNVSFSS) and 83 to 92 (LNLNTITKNL). 2 coiled-coil regions span residues 88–112 (ITKNLQQQKSFKKEEQQEKEEMNSK) and 196–228 (RERDQLYKKIQSKKSQLKTQQLKDQKRETKNKL). The span at 98 to 111 (FKKEEQQEKEEMNS) shows a compositional bias: basic and acidic residues. Residues 279-298 (ISSKEKTFLPQRRSFDQDEN) are disordered.

Belongs to the RRP36 family.

The protein localises to the nucleus. The protein resides in the nucleolus. Involved in the early processing steps of the pre-rRNA in the maturation pathway leading to the 18S rRNA. The polypeptide is Ribosomal RNA processing protein 36 homolog (Dictyostelium discoideum (Social amoeba)).